We begin with the raw amino-acid sequence, 494 residues long: Cytochrome P450 2A4 (494 aa).

Serine 131 is modified (phosphoserine). An N6-acetyllysine modification is found at lysine 379. Heme is bound at residue cysteine 439.

It belongs to the cytochrome P450 family. Requires heme as cofactor. In terms of tissue distribution, kidney and lung. Expressed in liver, with a strong circadian rhythmicity. Circadian expression is regulated by DBP.

It localises to the endoplasmic reticulum membrane. Its subcellular location is the microsome membrane. The catalysed reaction is an organic molecule + reduced [NADPH--hemoprotein reductase] + O2 = an alcohol + oxidized [NADPH--hemoprotein reductase] + H2O + H(+). Functionally, highly active in the 15-alpha-hydroxylation of testosterone. Also active in the 15-alpha-hydroxylation of progesterone and androstenedione. Little or no activity on corticosterone, pregnenolone, dehydroepiandrosterone, estradiol or estriol. In Mus musculus (Mouse), this protein is Cytochrome P450 2A4 (Cyp2a4).